A 284-amino-acid chain; its full sequence is D-tagatose-1,6-bisphosphate aldolase subunit GatY (284 aa).

Catalysis depends on Asp82, which acts as the Proton donor. Positions 83 and 180 each coordinate Zn(2+). Dihydroxyacetone phosphate is bound at residue Gly181. His208 is a Zn(2+) binding site. Residues 209–211 (GAS) and 230–233 (NVAT) contribute to the dihydroxyacetone phosphate site.

This sequence belongs to the class II fructose-bisphosphate aldolase family. TagBP aldolase GatY subfamily. In terms of assembly, forms a complex with GatZ. Zn(2+) serves as cofactor.

It catalyses the reaction D-tagatofuranose 1,6-bisphosphate = D-glyceraldehyde 3-phosphate + dihydroxyacetone phosphate. Its pathway is carbohydrate metabolism; D-tagatose 6-phosphate degradation; D-glyceraldehyde 3-phosphate and glycerone phosphate from D-tagatose 6-phosphate: step 2/2. Its function is as follows. Catalytic subunit of the tagatose-1,6-bisphosphate aldolase GatYZ, which catalyzes the reversible aldol condensation of dihydroxyacetone phosphate (DHAP or glycerone-phosphate) with glyceraldehyde 3-phosphate (G3P) to produce tagatose 1,6-bisphosphate (TBP). Requires GatZ subunit for full activity and stability. Is involved in the catabolism of galactitol. The sequence is that of D-tagatose-1,6-bisphosphate aldolase subunit GatY from Escherichia coli O45:K1 (strain S88 / ExPEC).